Consider the following 872-residue polypeptide: Alanine--tRNA ligase (872 aa).

The Zn(2+) site is built by H567, H571, C669, and H673.

This sequence belongs to the class-II aminoacyl-tRNA synthetase family. It depends on Zn(2+) as a cofactor.

The protein localises to the cytoplasm. It catalyses the reaction tRNA(Ala) + L-alanine + ATP = L-alanyl-tRNA(Ala) + AMP + diphosphate. Catalyzes the attachment of alanine to tRNA(Ala) in a two-step reaction: alanine is first activated by ATP to form Ala-AMP and then transferred to the acceptor end of tRNA(Ala). Also edits incorrectly charged Ser-tRNA(Ala) and Gly-tRNA(Ala) via its editing domain. The protein is Alanine--tRNA ligase of Streptococcus pyogenes serotype M18 (strain MGAS8232).